The sequence spans 685 residues: Putative lipase ROG1 (685 aa).

The active-site Charge relay system is the S269.

It belongs to the putative lipase ROG1 family.

In Saccharomyces cerevisiae (strain ATCC 204508 / S288c) (Baker's yeast), this protein is Putative lipase ROG1 (ROG1).